The chain runs to 594 residues: Probable ABC transporter-binding protein DR_1571 (594 aa).

The signal sequence occupies residues 1–18 (MKKVMMLALALGASTSLA).

The protein belongs to the bacterial solute-binding protein 5 family.

Its function is as follows. Probably part of a binding-protein-dependent transport system. The polypeptide is Probable ABC transporter-binding protein DR_1571 (Deinococcus radiodurans (strain ATCC 13939 / DSM 20539 / JCM 16871 / CCUG 27074 / LMG 4051 / NBRC 15346 / NCIMB 9279 / VKM B-1422 / R1)).